We begin with the raw amino-acid sequence, 213 residues long: Thymidylate kinase (213 aa).

10-17 contributes to the ATP binding site; sequence GIDGCGKT.

Belongs to the thymidylate kinase family.

The enzyme catalyses dTMP + ATP = dTDP + ADP. Its function is as follows. Phosphorylation of dTMP to form dTDP in both de novo and salvage pathways of dTTP synthesis. This is Thymidylate kinase from Synechococcus sp. (strain WH7803).